Here is a 36-residue protein sequence, read N- to C-terminus: uncharacterized protein (36 aa).

This is an uncharacterized protein from Enterobacteria phage T4 (Bacteriophage T4).